The following is a 427-amino-acid chain: uncharacterized protein (427 aa).

This is an uncharacterized protein from Human herpesvirus 7 (strain JI) (HHV-7).